Here is a 546-residue protein sequence, read N- to C-terminus: 2-isopropylmalate synthase (546 aa).

Residues 8-271 form the Pyruvate carboxyltransferase domain; that stretch reads ILIFDTTLRD…NSFFKRNPDS (264 aa). Asp-17, His-208, His-210, and Asn-244 together coordinate Mn(2+). Residues 408–546 form a regulatory domain region; the sequence is QLSLVQVSCG…NNTYISNPAN (139 aa).

Belongs to the alpha-IPM synthase/homocitrate synthase family. LeuA type 1 subfamily. As to quaternary structure, homodimer. Requires Mn(2+) as cofactor.

Its subcellular location is the cytoplasm. The enzyme catalyses 3-methyl-2-oxobutanoate + acetyl-CoA + H2O = (2S)-2-isopropylmalate + CoA + H(+). It participates in amino-acid biosynthesis; L-leucine biosynthesis; L-leucine from 3-methyl-2-oxobutanoate: step 1/4. In terms of biological role, catalyzes the condensation of the acetyl group of acetyl-CoA with 3-methyl-2-oxobutanoate (2-ketoisovalerate) to form 3-carboxy-3-hydroxy-4-methylpentanoate (2-isopropylmalate). This is 2-isopropylmalate synthase from Prochlorococcus marinus (strain MIT 9301).